An 82-amino-acid chain; its full sequence is MVDLFFNDTAWYIGQILVLVLFCLISLIFVVAFLATIKLCMQLCGFCNFFIISPSAYVYKRGMQLYKSYSEQVIPPTSDYLI.

Residues 1–16 lie on the Virion surface side of the membrane; it reads MVDLFFNDTAWYIGQI. A helical transmembrane segment spans residues 17-37; the sequence is LVLVLFCLISLIFVVAFLATI. The Intravirion portion of the chain corresponds to 38 to 79; sequence KLCMQLCGFCNFFIISPSAYVYKRGMQLYKSYSEQVIPPTSD.

The protein belongs to the betacoronaviruses E protein family. As to quaternary structure, homopentamer. Interacts with membrane protein M in the budding compartment of the host cell, which is located between endoplasmic reticulum and the Golgi complex. Interacts with Nucleoprotein.

It is found in the host Golgi apparatus membrane. In terms of biological role, plays a central role in virus morphogenesis and assembly. Acts as a viroporin and self-assembles in host membranes forming pentameric protein-lipid pores that allow ion transport. Also plays a role in the induction of apoptosis. In Human coronavirus HKU1 (isolate N1) (HCoV-HKU1), this protein is Envelope small membrane protein.